The chain runs to 74 residues: Major structural pilin EpdE (74 aa).

The propeptide occupies 1-12; that stretch reads MKFLEKLTSKKG. The residue at position 13 (Gln-13) is a Pyrrolidone carboxylic acid. The QXSXEXXXL motif lies at 13 to 21; sequence QIAMELGIL.

In terms of processing, the N-terminus is cleaved by the prepilin peptidase EppA, which recognizes the class III signal sequence. Post-translationally, N-glycosylated. Glycosylated with an N-linked branched pentasaccharide glycan. May contain glycans at three sites. Glycosylation is AglB-dependent. The N-glycosylation does not occur unless the signal peptide has been cleaved first.

It is found in the secreted. The protein localises to the cell surface. It localises to the fimbrium. In terms of biological role, major component of the type IV-like pili. The chain is Major structural pilin EpdE from Methanococcus maripaludis (strain DSM 14266 / JCM 13030 / NBRC 101832 / S2 / LL).